A 700-amino-acid chain; its full sequence is Elongation factor G 2 (700 aa).

The tr-type G domain maps to glutamate 8–isoleucine 290. GTP is bound by residues alanine 17–threonine 24, aspartate 88–histidine 92, and asparagine 142–aspartate 145.

It belongs to the TRAFAC class translation factor GTPase superfamily. Classic translation factor GTPase family. EF-G/EF-2 subfamily.

It is found in the cytoplasm. In terms of biological role, catalyzes the GTP-dependent ribosomal translocation step during translation elongation. During this step, the ribosome changes from the pre-translocational (PRE) to the post-translocational (POST) state as the newly formed A-site-bound peptidyl-tRNA and P-site-bound deacylated tRNA move to the P and E sites, respectively. Catalyzes the coordinated movement of the two tRNA molecules, the mRNA and conformational changes in the ribosome. This Ralstonia nicotianae (strain ATCC BAA-1114 / GMI1000) (Ralstonia solanacearum) protein is Elongation factor G 2 (fusB).